We begin with the raw amino-acid sequence, 304 residues long: D-alanine--D-alanine ligase (304 aa).

Residues 103 to 299 (KLIWQALGLP…FADLCIEILK (197 aa)) enclose the ATP-grasp domain. 129 to 184 (EEKLGLPMFVKPAAEGSSVGVVKVKGKGRLKSVYEELKHLQGEIIAERFIGGGEYS) is a binding site for ATP. Mg(2+) is bound by residues Asp253, Glu266, and Asn268.

Belongs to the D-alanine--D-alanine ligase family. Requires Mg(2+) as cofactor. Mn(2+) is required as a cofactor.

The protein localises to the cytoplasm. It catalyses the reaction 2 D-alanine + ATP = D-alanyl-D-alanine + ADP + phosphate + H(+). It participates in cell wall biogenesis; peptidoglycan biosynthesis. Cell wall formation. This chain is D-alanine--D-alanine ligase, found in Neisseria meningitidis serogroup C / serotype 2a (strain ATCC 700532 / DSM 15464 / FAM18).